Reading from the N-terminus, the 80-residue chain is Keratin-associated protein 6-1 (80 aa).

The protein belongs to the KRTAP type 6 family. As to quaternary structure, interacts with hair keratins.

In the hair cortex, hair keratin intermediate filaments are embedded in an interfilamentous matrix, consisting of hair keratin-associated proteins (KRTAP), which are essential for the formation of a rigid and resistant hair shaft through their extensive disulfide bond cross-linking with abundant cysteine residues of hair keratins. The matrix proteins include the high-sulfur and high-glycine-tyrosine keratins. The sequence is that of Keratin-associated protein 6-1 (KRTAP6-1) from Oryctolagus cuniculus (Rabbit).